Reading from the N-terminus, the 1213-residue chain is SWI/SNF complex subunit SMARCC2 (1213 aa).

The marR-like, BRCT and chromo domains module stretch occupies residues 1–274 (MAVRKKDGGP…PVSRRKKISA (274 aa)). In terms of domain architecture, MarR-like spans 10–136 (PNVKYYEAAD…IEKSLVQNNC (127 aa)). Residues 140–183 (PNIFLCPEIEPKLLGKLKDIVKRHQGTISEDKSNASHVVYPVPG) enclose the BRCT; N-terminus domain. The region spanning 189–217 (EWVRPVMKRDKQVLLHWGYYPDSYDTWIP) is the Chromo domain. A BRCT; C-terminus domain is found at 233–257 (KPRKVHAKWILDTDTFNEWMNEEDY). Positions 256 to 413 (DYEVSDDKSP…GEQTKNPDLH (158 aa)) are disordered. Residues 275–284 (KTLTDEVNSP) show a composition bias toward polar residues. A phosphoserine mark is found at Ser283, Ser286, Ser302, Ser304, and Ser306. Lys312 carries the N6-(ADP-ribosyl)lysine modification. The residue at position 326 (Lys326) is an N6-acetyllysine. A compositionally biased stretch (basic and acidic residues) spans 331–344 (HREEEQEDLTKDMD). 2 positions are modified to phosphoserine: Ser347 and Ser387. Residues 379–398 (DLDEQDDESMETTGKDEDEN) show a composition bias toward acidic residues. In terms of domain architecture, SWIRM spans 424–521 (IIIPSYAAWF…YQVDAESRPT (98 aa)). Residues Lys564, Lys566, Lys568, and Lys592 each participate in a glycyl lysine isopeptide (Lys-Gly) (interchain with G-Cter in SUMO2) cross-link. The 52-residue stretch at 596-647 (SATREWTEQETLLLLEALEMYKDDWNKVSEHVGSRTQDECILHFLRLPIEDP) folds into the SANT domain. Residue Lys704 forms a Glycyl lysine isopeptide (Lys-Gly) (interchain with G-Cter in SUMO2) linkage. The interval 724–848 (KVTGKADPAF…AEPEGERKTK (125 aa)) is disordered. Positions 747-777 (EPERIEESGTEEARPEGQAADEKKEPKEPRE) are enriched in basic and acidic residues. A Glycyl lysine isopeptide (Lys-Gly) (interchain with G-Cter in SUMO2) cross-link involves residue Lys787. The span at 788-848 (EEISEVPKKD…AEPEGERKTK (61 aa)) shows a compositional bias: basic and acidic residues. The residue at position 813 (Ser813) is a Phosphoserine. Lys848 is covalently cross-linked (Glycyl lysine isopeptide (Lys-Gly) (interchain with G-Cter in SUMO2)). Residues 907–934 (EELETIMDREREALEYQRQQLLADRQAF) are a coiled coil. Disordered stretches follow at residues 947–1073 (RQQH…HPGV) and 1181–1213 (LPSASPLPDPGTPLPPDPTAPSPGTVTPVPPPQ). The span at 949 to 962 (QHFQQMHQQQQQQP) shows a compositional bias: low complexity. Pro residues predominate over residues 963-974 (PTLPPGSQPIPP). Over residues 975-1033 (TGAAGPPTVHGLAVPPAAVASAPPGSGAPPGSLGPSEQIGQAGTTAGPQQPQQAGAPQP) the composition is skewed to low complexity. 2 stretches are compositionally biased toward pro residues: residues 1034 to 1060 (GAVPPGVPPPGPHGPSPFPNQPTPPSM) and 1185 to 1201 (SPLPDPGTPLPPDPTAP).

This sequence belongs to the SMARCC family. As to quaternary structure, component of the multiprotein chromatin-remodeling complexes SWI/SNF: SWI/SNF-A (BAF), SWI/SNF-B (PBAF) and related complexes. The canonical complex contains a catalytic subunit (either SMARCA4/BRG1/BAF190A or SMARCA2/BRM/BAF190B) and at least SMARCE1, ACTL6A/BAF53, SMARCC1/BAF155, SMARCC2/BAF170, and SMARCB1/SNF5/BAF47. Other subunits specific to each of the complexes may also be present permitting several possible combinations developmentally and tissue specific. Component of the BAF complex, which includes at least actin (ACTB), ARID1A/BAF250A, ARID1B/BAF250B, SMARCA2/BRM, SMARCA4/BRG1, ACTL6A/BAF53, ACTL6B/BAF53B, SMARCE1/BAF57, SMARCC1/BAF155, SMARCC2/BAF170, SMARCB1/SNF5/INI1, and one or more SMARCD1/BAF60A, SMARCD2/BAF60B, or SMARCD3/BAF60C. In muscle cells, the BAF complex also contains DPF3. Component of neural progenitors-specific chromatin remodeling complex (npBAF complex) composed of at least, ARID1A/BAF250A or ARID1B/BAF250B, SMARCD1/BAF60A, SMARCD3/BAF60C, SMARCA2/BRM/BAF190B, SMARCA4/BRG1/BAF190A, SMARCB1/BAF47, SMARCC1/BAF155, SMARCE1/BAF57, SMARCC2/BAF170, PHF10/BAF45A, ACTL6A/BAF53A and actin. Component of neuron-specific chromatin remodeling complex (nBAF complex) composed of at least, ARID1A/BAF250A or ARID1B/BAF250B, SMARCD1/BAF60A, SMARCD3/BAF60C, SMARCA2/BRM/BAF190B, SMARCA4/BRG1/BAF190A, SMARCB1/BAF47, SMARCC1/BAF155, SMARCE1/BAF57, SMARCC2/BAF170, DPF1/BAF45B, DPF3/BAF45C, ACTL6B/BAF53B and actin. Component of the SWI/SNF-B (PBAF) chromatin remodeling complex, at least composed of SMARCA4/BRG1, SMARCB1/BAF47/SNF5, ACTL6A/BAF53A or ACTL6B/BAF53B, SMARCE1/BAF57, SMARCD1/BAF60A, SMARCD2/BAF60B, perhaps SMARCD3/BAF60C, SMARCC1/BAF155, SMARCC2/BAF170, PBRM1/BAF180, ARID2/BAF200 and actin. May also interact with the SIN3A histone deacetylase transcription repressor complex in conjunction with SMARCA2 and SMARCA4. Interacts with SMARD1. Interacts with KDM6B. Interaction with RCOR1. Interacts with DPF2. Interacts with ERCC6. Interacts with FOS. Mono-ADP-ribosylation at Lys-312 by SIRT6 promotes recruitment to the enhancer region of the Heme oxygenase-1 (HO-1) locus, leading to transcription activation of the locus.

The protein localises to the nucleus. Involved in transcriptional activation and repression of select genes by chromatin remodeling (alteration of DNA-nucleosome topology). Component of SWI/SNF chromatin remodeling complexes that carry out key enzymatic activities, changing chromatin structure by altering DNA-histone contacts within a nucleosome in an ATP-dependent manner. Can stimulate the ATPase activity of the catalytic subunit of these complexes. May be required for CoREST dependent repression of neuronal specific gene promoters in non-neuronal cells. Belongs to the neural progenitors-specific chromatin remodeling complex (npBAF complex) and the neuron-specific chromatin remodeling complex (nBAF complex). During neural development a switch from a stem/progenitor to a postmitotic chromatin remodeling mechanism occurs as neurons exit the cell cycle and become committed to their adult state. The transition from proliferating neural stem/progenitor cells to postmitotic neurons requires a switch in subunit composition of the npBAF and nBAF complexes. As neural progenitors exit mitosis and differentiate into neurons, npBAF complexes which contain ACTL6A/BAF53A and PHF10/BAF45A, are exchanged for homologous alternative ACTL6B/BAF53B and DPF1/BAF45B or DPF3/BAF45C subunits in neuron-specific complexes (nBAF). The npBAF complex is essential for the self-renewal/proliferative capacity of the multipotent neural stem cells. The nBAF complex along with CREST plays a role regulating the activity of genes essential for dendrite growth. Critical regulator of myeloid differentiation, controlling granulocytopoiesis and the expression of genes involved in neutrophil granule formation. This chain is SWI/SNF complex subunit SMARCC2 (Smarcc2), found in Mus musculus (Mouse).